Here is a 437-residue protein sequence, read N- to C-terminus: GTPase Der (437 aa).

2 EngA-type G domains span residues 2 to 167 (ATVL…EKKG) and 180 to 356 (IRVA…NSLF). GTP-binding positions include 8–15 (GKSNVGKS), 55–59 (DTCGI), 118–121 (NKSE), 186–193 (GRPNAGKS), 233–237 (DTAGL), and 299–302 (NKID). The 81-residue stretch at 357-437 (YRVQTSAVNA…PIFLKFKNRH (81 aa)) folds into the KH-like domain.

The protein belongs to the TRAFAC class TrmE-Era-EngA-EngB-Septin-like GTPase superfamily. EngA (Der) GTPase family. Associates with the 50S ribosomal subunit.

In terms of biological role, GTPase that plays an essential role in the late steps of ribosome biogenesis. The chain is GTPase Der from Thermosipho melanesiensis (strain DSM 12029 / CIP 104789 / BI429).